We begin with the raw amino-acid sequence, 436 residues long: GTPase Der (436 aa).

EngA-type G domains are found at residues proline 4–proline 167 and valine 176–alanine 351. GTP-binding positions include glycine 10–serine 17, aspartate 57–isoleucine 61, asparagine 119–aspartate 122, glycine 182–serine 189, aspartate 229–methionine 233, and asparagine 294–aspartate 297. The 85-residue stretch at methionine 352–lysine 436 folds into the KH-like domain.

This sequence belongs to the TRAFAC class TrmE-Era-EngA-EngB-Septin-like GTPase superfamily. EngA (Der) GTPase family. In terms of assembly, associates with the 50S ribosomal subunit.

GTPase that plays an essential role in the late steps of ribosome biogenesis. This is GTPase Der from Bacillus pumilus (strain SAFR-032).